Here is a 431-residue protein sequence, read N- to C-terminus: 2-oxoisovalerate dehydrogenase subunit alpha, mitochondrial (431 aa).

140–142 lines the thiamine diphosphate pocket; sequence QYR. Residues serine 189, threonine 194, and glutamine 195 each contribute to the K(+) site.

This sequence belongs to the BCKDHA family. Thiamine diphosphate serves as cofactor.

It is found in the mitochondrion matrix. The enzyme catalyses N(6)-[(R)-lipoyl]-L-lysyl-[protein] + 3-methyl-2-oxobutanoate + H(+) = N(6)-[(R)-S(8)-2-methylpropanoyldihydrolipoyl]-L-lysyl-[protein] + CO2. It participates in lipid metabolism; fatty acid biosynthesis. Functionally, the branched-chain alpha-keto dehydrogenase complex catalyzes the overall conversion of alpha-keto acids to acyl-CoA and CO(2). It contains multiple copies of three enzymatic components: branched-chain alpha-keto acid decarboxylase (E1), lipoamide acyltransferase (E2) and lipoamide dehydrogenase (E3). Required for the production of the monomethyl branched-chain fatty acids (mmBCFAs) isopentadecanoate (C15iso) and isoheptadecanoate (C17iso). The chain is 2-oxoisovalerate dehydrogenase subunit alpha, mitochondrial from Caenorhabditis elegans.